The following is a 428-amino-acid chain: Flotillin-2 (428 aa).

A lipid anchor (N-myristoyl glycine) is attached at glycine 2. Cysteine 4 carries S-palmitoyl cysteine; by ZDHHC5 lipidation. A lipid anchor (S-palmitoyl cysteine) is attached at cysteine 19. Cysteine 20 carries S-palmitoyl cysteine; by ZDHHC5 lipidation. Serine 405 is modified (phosphoserine).

This sequence belongs to the band 7/mec-2 family. Flotillin subfamily. As to quaternary structure, heterooligomeric complex of flotillin-1 and flotillin-2 and caveolin-1 and caveolin-2. Interacts with ECPAS. ZDHHC5-catalyzed palmitoylation may be required for the formation of higher-order complexes and for neurite outgrowth in cultured neural stem cells.

The protein localises to the cell membrane. It is found in the membrane. It localises to the caveola. Its subcellular location is the endosome. Functionally, may act as a scaffolding protein within caveolar membranes, functionally participating in formation of caveolae or caveolae-like vesicles. May be involved in epidermal cell adhesion and epidermal structure and function. The chain is Flotillin-2 (FLOT2) from Bos taurus (Bovine).